A 232-amino-acid polypeptide reads, in one-letter code: Large ribosomal subunit protein uL1 (232 aa).

The protein belongs to the universal ribosomal protein uL1 family. In terms of assembly, part of the 50S ribosomal subunit.

Its function is as follows. Binds directly to 23S rRNA. The L1 stalk is quite mobile in the ribosome, and is involved in E site tRNA release. Protein L1 is also a translational repressor protein, it controls the translation of the L11 operon by binding to its mRNA. This chain is Large ribosomal subunit protein uL1, found in Marinobacter nauticus (strain ATCC 700491 / DSM 11845 / VT8) (Marinobacter aquaeolei).